We begin with the raw amino-acid sequence, 246 residues long: Probable transcriptional regulatory protein CLD_1467 (246 aa).

This sequence belongs to the TACO1 family.

It is found in the cytoplasm. In Clostridium botulinum (strain Okra / Type B1), this protein is Probable transcriptional regulatory protein CLD_1467.